A 258-amino-acid polypeptide reads, in one-letter code: Type III pantothenate kinase (258 aa).

ATP is bound at residue 6–13 (DVGNTNTV). Residues Tyr100 and 107-110 (GADR) each bind substrate. The active-site Proton acceptor is the Asp109. Asp129 contributes to the K(+) binding site. Thr132 serves as a coordination point for ATP. Residue Thr184 participates in substrate binding.

It belongs to the type III pantothenate kinase family. As to quaternary structure, homodimer. Requires NH4(+) as cofactor. K(+) serves as cofactor.

It is found in the cytoplasm. It catalyses the reaction (R)-pantothenate + ATP = (R)-4'-phosphopantothenate + ADP + H(+). It participates in cofactor biosynthesis; coenzyme A biosynthesis; CoA from (R)-pantothenate: step 1/5. Its function is as follows. Catalyzes the phosphorylation of pantothenate (Pan), the first step in CoA biosynthesis. This Geobacillus kaustophilus (strain HTA426) protein is Type III pantothenate kinase.